The primary structure comprises 145 residues: Trafficking protein particle complex subunit 1 (145 aa).

Belongs to the TRAPP small subunits family. BET5 subfamily. As to quaternary structure, part of the multisubunit transport protein particle (TRAPP) complex. The heterodimer TRAPPC6B-TRAPPC3 interacts with TRAPPC1 likely providing a core for TRAPP complex formation.

It is found in the golgi apparatus. Its subcellular location is the cis-Golgi network. It localises to the endoplasmic reticulum. May play a role in vesicular transport from endoplasmic reticulum to Golgi. The chain is Trafficking protein particle complex subunit 1 from Mus musculus (Mouse).